The primary structure comprises 590 residues: Vesicular glutamate transporter 3 (590 aa).

At 1–76 the chain is on the cytoplasmic side; the sequence is MPLGGFAGLK…CGCFGLPKRY (76 aa). Residues 77–97 traverse the membrane as a helical segment; that stretch reads IIAMLSGLGFCISFGIRCNLG. The Vesicular segment spans residues 98 to 130; the sequence is VAIVEMVNNNTVYINGTAVMQPAQFNWDPETVG. 2 N-linked (GlcNAc...) asparagine glycosylation sites follow: Asn106 and Asn112. Residues 131–151 traverse the membrane as a helical segment; the sequence is LIHGSFFWGYIVTQIPGGFIS. Over 152 to 153 the chain is Cytoplasmic; it reads NK. The helical transmembrane segment at 154–174 threads the bilayer; sequence LAANRVFGAAIFLTSVLNMFI. Residues 175-182 are Vesicular-facing; the sequence is PSAARVHY. The helical transmembrane segment at 183-203 threads the bilayer; the sequence is GCVMFVRILQGLVEGVTYPAC. The Cytoplasmic portion of the chain corresponds to 204–221; the sequence is HGMWSKWAPPLERSRLAT. The helical transmembrane segment at 222–242 threads the bilayer; sequence TSFCGSYAGAVIAMPLAGILV. At 243 to 249 the chain is on the vesicular side; the sequence is QYVGWPS. The chain crosses the membrane as a helical span at residues 250–270; sequence VFYIYGVFGIIWYIFWILLAY. Topologically, residues 271-315 are cytoplasmic; that stretch reads NSPAVHPTISEEERNYIETSIGEGANLMSSTEKFKTPWREFFTSM. A helical membrane pass occupies residues 316 to 336; the sequence is PVYAIIVANFCRSWTFYLLLI. The Vesicular portion of the chain corresponds to 337-354; that stretch reads SQPAYFEEVFGFPISKVG. The helical transmembrane segment at 355 to 375 threads the bilayer; sequence ILSAVPHMVMTIIVPIGGQLA. Residues 376–391 are Cytoplasmic-facing; sequence DFLRSRKILSTTTVRK. Residues 392–412 traverse the membrane as a helical segment; that stretch reads IMNCGGFGMEATLLLVVGFSH. At 413–414 the chain is on the vesicular side; it reads TR. A helical transmembrane segment spans residues 415-435; the sequence is AVAISFLILAVGFSGFAISGF. The Cytoplasmic segment spans residues 436-448; sequence NVNHLDIAPRYAS. Residues 449 to 469 form a helical membrane-spanning segment; sequence ILMGISNGVGTLSGMVCPLIV. Over 470–482 the chain is Vesicular; it reads GALTKHKTRLEWQ. Residues 483 to 503 form a helical membrane-spanning segment; it reads HVFVIASMVHYTGVIFYAIFA. Residues 504-587 are Cytoplasmic-facing; sequence SGEKQDWADP…NHYENGEYQT (84 aa). A compositionally biased stretch (acidic residues) spans 526–535; that stretch reads EDELADETEP. Positions 526-590 are disordered; the sequence is EDELADETEP…ENGEYQTQYQ (65 aa). Positions 536–557 are enriched in polar residues; it reads SSDSGLATRQKTYGTTDNSSGR.

The protein belongs to the major facilitator superfamily. Sodium/anion cotransporter family. VGLUT subfamily.

The protein resides in the cytoplasmic vesicle. The protein localises to the secretory vesicle. It is found in the synaptic vesicle membrane. It localises to the cell membrane. Its subcellular location is the synapse. The protein resides in the synaptosome. It carries out the reaction L-glutamate(out) = L-glutamate(in). The enzyme catalyses 3 Na(+)(out) + phosphate(out) = 3 Na(+)(in) + phosphate(in). The catalysed reaction is chloride(in) = chloride(out). Its activity is regulated as follows. The L-glutamate uniporter activity exhibits a biphasic dependence on chloride concentration. Chloride channel activity is allosterically activated by lumenal H(+) and Cl(-) leading to synaptic vesicles acidification. The glutamate transport activity is allosterically activated by lumenal H(+) and Cl(-), preventing non-vesicular L-glutamate release. Functionally, multifunctional transporter that transports L-glutamate as well as multiple ions such as chloride, sodium and phosphate. At the synaptic vesicle membrane, mainly functions as an uniporter that mediates the uptake of L-glutamate into synaptic vesicles at presynaptic nerve terminals of excitatory neural cells. The L-glutamate uniporter activity is electrogenic and is driven by the proton electrochemical gradient, mainly by the electrical gradient established by the vacuolar H(+)-ATPase across the synaptic vesicle membrane. In addition, functions as a chloride channel that allows a chloride permeation through the synaptic vesicle membrane that affects the proton electrochemical gradient and promotes synaptic vesicles acidification. At the plasma membrane, following exocytosis, functions as a symporter of Na(+) and phosphate from the extracellular space to the cytoplasm allowing synaptic phosphate homeostasis regulation. The symporter activity is electrogenic. Moreover, operates synergistically with SLC18A3/VACHT under a constant H(+) gradient, thereby allowing striatal vesicular acetylcholine uptake. The chain is Vesicular glutamate transporter 3 from Danio rerio (Zebrafish).